The sequence spans 865 residues: DNA mismatch repair protein MutS (865 aa).

605 to 612 (GPNMAGKS) contacts ATP. The segment at 814 to 833 (PEPLEAYKPKGNKQPLSDEE) is disordered.

Belongs to the DNA mismatch repair MutS family.

Functionally, this protein is involved in the repair of mismatches in DNA. It is possible that it carries out the mismatch recognition step. This protein has a weak ATPase activity. This chain is DNA mismatch repair protein MutS, found in Halalkalibacterium halodurans (strain ATCC BAA-125 / DSM 18197 / FERM 7344 / JCM 9153 / C-125) (Bacillus halodurans).